We begin with the raw amino-acid sequence, 523 residues long: Monocarboxylate transporter 7 (523 aa).

Over 1–21 (MTQNKLKLCSKANVYTEVPDG) the chain is Cytoplasmic. A helical transmembrane segment spans residues 22–42 (GWGWAVAVSFFFVEVFTYGII). At 43–62 (KTFGVFFNDLMDSFNESNSR) the chain is on the extracellular side. A helical membrane pass occupies residues 63 to 83 (ISWIISICVFVLTFSAPLATV). At 84 to 91 (LSNRFGHR) the chain is on the cytoplasmic side. A helical membrane pass occupies residues 92 to 112 (LVVMLGGLLVSTGMVAASFSQ). At 113–118 (EVSHMY) the chain is on the extracellular side. Residues 119 to 139 (VAIGIISGLGYCFSFLPTVTI) traverse the membrane as a helical segment. Over 140–149 (LSQYFGKRRS) the chain is Cytoplasmic. Residues 150 to 170 (IVTAVASTGECFAVFAFAPAI) traverse the membrane as a helical segment. The Extracellular portion of the chain corresponds to 171–184 (MALKERIGWRYSLL). The helical transmembrane segment at 185–205 (FVGLLQLNIVIFGALLRPIFI) threads the bilayer. Topologically, residues 206 to 299 (RGPASPKIVI…KEKSFICYAL (94 aa)) are cytoplasmic. 4 positions are modified to phosphoserine: serine 234, serine 237, serine 240, and serine 247. Residues 300–320 (FGLFATLGFFAPSLYIIPLGI) form a helical membrane-spanning segment. Residues 321 to 330 (SLGIDQDRAA) lie on the Extracellular side of the membrane. Residues 331 to 351 (FLLSTMAIAEVFGRIGAGFVL) form a helical membrane-spanning segment. The Cytoplasmic segment spans residues 352–358 (NREPIRK). The helical transmembrane segment at 359-379 (IYIELICVILLTVSLFAFTFA) threads the bilayer. Over 380–381 (TE) the chain is Extracellular. A helical membrane pass occupies residues 382–402 (FWGLMSCSIFFGFMVGTIGGT). The Cytoplasmic portion of the chain corresponds to 403–423 (HIPLLAEDDVVGIEKMSSAAG). The helical transmembrane segment at 424-444 (VYIFIQSIAGLAGPPLAGLLV) threads the bilayer. Topologically, residues 445–452 (DQSKIYSR) are extracellular. A helical membrane pass occupies residues 453-473 (AFYSCAAGMALAAVCLALVRP). The Cytoplasmic portion of the chain corresponds to 474-523 (CKMGLCQHHHSGETKVVSHRGKTLQDIPEDFLEMDLAKNEHRVHVQMEPV).

This sequence belongs to the major facilitator superfamily. Monocarboxylate porter (TC 2.A.1.13) family. Forms functional complexes with BSG/CD147 or EMB/GP70 ancillary proteins.

It is found in the basolateral cell membrane. It catalyses the reaction taurine(out) = taurine(in). In terms of biological role, monocarboxylate transporter selective for taurine. May associate with BSG/CD147 or EMB/GP70 ancillary proteins to mediate facilitative efflux or influx of taurine across the plasma membrane. The transport is pH- and sodium-independent. Rather low-affinity, is likely effective for taurine transport in tissues where taurine is present at high concentrations. This is Monocarboxylate transporter 7 from Homo sapiens (Human).